The chain runs to 395 residues: Elongation factor Tu (395 aa).

Residues 10–204 (KPHVNIGTIG…AVDEYIPTPQ (195 aa)) form the tr-type G domain. Positions 19–26 (GHVDHGKT) are G1. 19–26 (GHVDHGKT) lines the GTP pocket. Residue Thr26 coordinates Mg(2+). The tract at residues 60–64 (GITIS) is G2. Residues 81 to 84 (DCPG) are G3. Residues 81–85 (DCPGH) and 136–139 (NKCD) each bind GTP. The tract at residues 136–139 (NKCD) is G4. The G5 stretch occupies residues 174–176 (SAL).

The protein belongs to the TRAFAC class translation factor GTPase superfamily. Classic translation factor GTPase family. EF-Tu/EF-1A subfamily. In terms of assembly, monomer.

The protein localises to the cytoplasm. It catalyses the reaction GTP + H2O = GDP + phosphate + H(+). In terms of biological role, GTP hydrolase that promotes the GTP-dependent binding of aminoacyl-tRNA to the A-site of ribosomes during protein biosynthesis. The sequence is that of Elongation factor Tu from Geobacillus stearothermophilus (Bacillus stearothermophilus).